The sequence spans 183 residues: Probable chemoreceptor glutamine deamidase CheD (183 aa).

It belongs to the CheD family.

It catalyses the reaction L-glutaminyl-[protein] + H2O = L-glutamyl-[protein] + NH4(+). Probably deamidates glutamine residues to glutamate on methyl-accepting chemotaxis receptors (MCPs), playing an important role in chemotaxis. This Rhizobium meliloti (strain 1021) (Ensifer meliloti) protein is Probable chemoreceptor glutamine deamidase CheD.